The following is a 276-amino-acid chain: Diaminopimelate epimerase (276 aa).

The substrate site is built by Asn13, Gln46, and Asn66. The Proton donor role is filled by Cys75. Substrate is bound by residues 76–77 (GN), Asn159, Asn192, and 210–211 (ER). Cys219 acts as the Proton acceptor in catalysis. 220–221 (GT) provides a ligand contact to substrate.

This sequence belongs to the diaminopimelate epimerase family. Homodimer.

The protein localises to the cytoplasm. The enzyme catalyses (2S,6S)-2,6-diaminopimelate = meso-2,6-diaminopimelate. It functions in the pathway amino-acid biosynthesis; L-lysine biosynthesis via DAP pathway; DL-2,6-diaminopimelate from LL-2,6-diaminopimelate: step 1/1. Functionally, catalyzes the stereoinversion of LL-2,6-diaminopimelate (L,L-DAP) to meso-diaminopimelate (meso-DAP), a precursor of L-lysine and an essential component of the bacterial peptidoglycan. The polypeptide is Diaminopimelate epimerase (Teredinibacter turnerae (strain ATCC 39867 / T7901)).